Consider the following 206-residue polypeptide: Large ribosomal subunit protein uL4 (206 aa).

Positions 43 to 52 are enriched in polar residues; sequence NKRQGTQSAK. Residues 43 to 86 are disordered; sequence NKRQGTQSAKTRAEVSGGGRKPWRQKGTGHARQGSTRSPQWKGG.

It belongs to the universal ribosomal protein uL4 family. In terms of assembly, part of the 50S ribosomal subunit.

One of the primary rRNA binding proteins, this protein initially binds near the 5'-end of the 23S rRNA. It is important during the early stages of 50S assembly. It makes multiple contacts with different domains of the 23S rRNA in the assembled 50S subunit and ribosome. Functionally, forms part of the polypeptide exit tunnel. The sequence is that of Large ribosomal subunit protein uL4 from Lachnoclostridium phytofermentans (strain ATCC 700394 / DSM 18823 / ISDg) (Clostridium phytofermentans).